A 375-amino-acid chain; its full sequence is Chaperone protein DnaJ (375 aa).

Positions Asp-4–Gly-68 constitute a J domain. The segment at Gly-129–Arg-211 adopts a CR-type zinc-finger fold. Residues Cys-142, Cys-145, Cys-159, Cys-162, Cys-185, Cys-188, Cys-199, and Cys-202 each contribute to the Zn(2+) site. 4 CXXCXGXG motif repeats span residues Cys-142 to Gly-149, Cys-159 to Gly-166, Cys-185 to Gly-192, and Cys-199 to Gly-206. The interval Leu-349–Glu-375 is disordered.

It belongs to the DnaJ family. In terms of assembly, homodimer. Requires Zn(2+) as cofactor.

The protein resides in the cytoplasm. Participates actively in the response to hyperosmotic and heat shock by preventing the aggregation of stress-denatured proteins and by disaggregating proteins, also in an autonomous, DnaK-independent fashion. Unfolded proteins bind initially to DnaJ; upon interaction with the DnaJ-bound protein, DnaK hydrolyzes its bound ATP, resulting in the formation of a stable complex. GrpE releases ADP from DnaK; ATP binding to DnaK triggers the release of the substrate protein, thus completing the reaction cycle. Several rounds of ATP-dependent interactions between DnaJ, DnaK and GrpE are required for fully efficient folding. Also involved, together with DnaK and GrpE, in the DNA replication of plasmids through activation of initiation proteins. The sequence is that of Chaperone protein DnaJ from Brevibacillus choshinensis.